A 566-amino-acid polypeptide reads, in one-letter code: MSTNLNPFMNNTPSSSPLKGSESKRVSKRPISSSSSASLLSSPSRRSRPSTVYGDRYIPSRTDIDFNSIVSISSMASVPALNPSSTEDQVEYQKERQAHETYNTLLKNELFGEMLSKDTVGSESSIDRIKNTRPSTRGNVHAENTTRHGYELERVSTPPPEAAGLEEFSPHSTPVTPRRLFTSQQDEITRPSSNSVRGASLLTYQQRKGRRLSAASLLQSQFFDSMSPVRPDSKQLLLSPGKQFRQIAKVPYRVLDAPSLADDFYYSLIDWSSTDVLAVALGKSIFLTDNNTGDVVHLCDTENEYTSLSWIGAGSHLAVGQANGLVEIYDVMKRKCIRTLSGHIDRVACLSWNNHVLTSGSRDHRILHRDVRMPDPFFETIESHTQEVCGLKWNVADNKLASGGNDNVVHVYEGTSKSPILTFDEHKAAVKAMAWSPHKRGVLATGGGTADRRLKIWNVNTSIKMSDIDSGSQICNMVWSKNTNELVTSHGYSKYNLTLWDCNSMDPIAILKGHSFRVLHLTLSNDGTTVVSGAGDETLRYWKLFDKPKAKVQPNSLIFDAFNQIR.

A compositionally biased stretch (polar residues) spans 1–18; that stretch reads MSTNLNPFMNNTPSSSPL. The segment at 1-56 is disordered; that stretch reads MSTNLNPFMNNTPSSSPLKGSESKRVSKRPISSSSSASLLSSPSRRSRPSTVYGDR. Over residues 29–44 the composition is skewed to low complexity; it reads RPISSSSSASLLSSPS. The C-box motif lies at 55–61; the sequence is DRYIPSR. Ser213 is subject to Phosphoserine. 7 WD repeats span residues 258–298, 300–339, 342–379, 383–422, 425–467, 469–510, and 513–552; these read PSLA…VVHL, DTENEYTSLSWIGAGSHLAVGQANGLVEIYDVMKRKCIRT, GHIDRVACLSWNNHVLTSGSRDHRILHRDVRMPDPFFE, SHTQEVCGLKWNVADNKLASGGNDNVVHVYEGTSKSPILT, EHKA…KMSD, DSGS…PIAI, and GHSFRVLHLTLSNDGTTVVSGAGDETLRYWKLFDKPKAKV.

It belongs to the WD repeat CDC20/Fizzy family. As to quaternary structure, associates with the APC/C complex. Interacts with CLB2, CLB3, CDC5, HSL1, MSN5 and PSE1. Phosphorylated at multiple sites by CDC28, probably in its CLB5 bound form, in S, G2 and M phase of the cell cycle, thereby blocking the association of CDH1 to the APC/C and promoting nuclear export of CDH1 by MSN5. Dephosphorylated and activated by CDC14 in late anaphase, which may be necessary for PSE1-dependent nuclear localization.

It is found in the cytoplasm. Its subcellular location is the nucleus. In terms of biological role, activator protein that regulates the ubiquitin ligase activity and substrate specificity of the anaphase promoting complex/cyclosome (APC/C). During telophase and in the subsequent G1 phase of the cell cycle, recognizes and binds proteins containing a destruction box (D-box) and an additional degradation signal termed the KEN box including ASE1, CDC20, the B-type cyclins CLB2 and CLB3, the polo-like kinase CDC5 and HSL1, and recruits them in a C-box-dependent manner to the APC/C for ubiquitination and subsequent proteolysis. Required for exit from mitosis, cytokinesis and formation of prereplicative complexes in G1. Probably is the target of a BUB2-dependent spindle checkpoint pathway. The sequence is that of APC/C activator protein CDH1 (CDH1) from Saccharomyces cerevisiae (strain ATCC 204508 / S288c) (Baker's yeast).